A 49-amino-acid polypeptide reads, in one-letter code: Protein YlcJ (49 aa).

Positions 1 to 21 are cleaved as a signal peptide; sequence MSLVLCFLLMSLFFMYSFVLS.

In Escherichia coli (strain K12), this protein is Protein YlcJ.